A 185-amino-acid polypeptide reads, in one-letter code: Large ribosomal subunit protein uL5 (185 aa).

The protein belongs to the universal ribosomal protein uL5 family. As to quaternary structure, part of the 50S ribosomal subunit; part of the 5S rRNA/L5/L18/L25 subcomplex. Contacts the 5S rRNA and the P site tRNA. Forms a bridge to the 30S subunit in the 70S ribosome.

In terms of biological role, this is one of the proteins that bind and probably mediate the attachment of the 5S RNA into the large ribosomal subunit, where it forms part of the central protuberance. In the 70S ribosome it contacts protein S13 of the 30S subunit (bridge B1b), connecting the 2 subunits; this bridge is implicated in subunit movement. Contacts the P site tRNA; the 5S rRNA and some of its associated proteins might help stabilize positioning of ribosome-bound tRNAs. This Rhodopseudomonas palustris (strain HaA2) protein is Large ribosomal subunit protein uL5.